Reading from the N-terminus, the 333-residue chain is Holliday junction branch migration complex subunit RuvB (333 aa).

A large ATPase domain (RuvB-L) region spans residues 1–181 (MNDILNKEPM…FGISSHMEYY (181 aa)). ATP is bound by residues leucine 20, arginine 21, glycine 62, lysine 65, threonine 66, threonine 67, 128 to 130 (EDF), arginine 171, tyrosine 181, and arginine 218. Position 66 (threonine 66) interacts with Mg(2+). Residues 182–252 (QERDLEEIVK…ITDKALTILD (71 aa)) are small ATPAse domain (RuvB-S). A head domain (RuvB-H) region spans residues 255-333 (AAGLDYIDQK…HLGYVYNEEE (79 aa)). Residues arginine 291, arginine 310, and arginine 315 each coordinate DNA.

It belongs to the RuvB family. In terms of assembly, homohexamer. Forms an RuvA(8)-RuvB(12)-Holliday junction (HJ) complex. HJ DNA is sandwiched between 2 RuvA tetramers; dsDNA enters through RuvA and exits via RuvB. An RuvB hexamer assembles on each DNA strand where it exits the tetramer. Each RuvB hexamer is contacted by two RuvA subunits (via domain III) on 2 adjacent RuvB subunits; this complex drives branch migration. In the full resolvosome a probable DNA-RuvA(4)-RuvB(12)-RuvC(2) complex forms which resolves the HJ.

It localises to the cytoplasm. The enzyme catalyses ATP + H2O = ADP + phosphate + H(+). The RuvA-RuvB-RuvC complex processes Holliday junction (HJ) DNA during genetic recombination and DNA repair, while the RuvA-RuvB complex plays an important role in the rescue of blocked DNA replication forks via replication fork reversal (RFR). RuvA specifically binds to HJ cruciform DNA, conferring on it an open structure. The RuvB hexamer acts as an ATP-dependent pump, pulling dsDNA into and through the RuvAB complex. RuvB forms 2 homohexamers on either side of HJ DNA bound by 1 or 2 RuvA tetramers; 4 subunits per hexamer contact DNA at a time. Coordinated motions by a converter formed by DNA-disengaged RuvB subunits stimulates ATP hydrolysis and nucleotide exchange. Immobilization of the converter enables RuvB to convert the ATP-contained energy into a lever motion, pulling 2 nucleotides of DNA out of the RuvA tetramer per ATP hydrolyzed, thus driving DNA branch migration. The RuvB motors rotate together with the DNA substrate, which together with the progressing nucleotide cycle form the mechanistic basis for DNA recombination by continuous HJ branch migration. Branch migration allows RuvC to scan DNA until it finds its consensus sequence, where it cleaves and resolves cruciform DNA. This chain is Holliday junction branch migration complex subunit RuvB, found in Lactococcus lactis subsp. cremoris (strain SK11).